A 427-amino-acid chain; its full sequence is Glutamate-1-semialdehyde 2,1-aminomutase (427 aa).

K265 bears the N6-(pyridoxal phosphate)lysine mark.

Belongs to the class-III pyridoxal-phosphate-dependent aminotransferase family. HemL subfamily. Homodimer. It depends on pyridoxal 5'-phosphate as a cofactor.

It is found in the cytoplasm. The catalysed reaction is (S)-4-amino-5-oxopentanoate = 5-aminolevulinate. It functions in the pathway porphyrin-containing compound metabolism; protoporphyrin-IX biosynthesis; 5-aminolevulinate from L-glutamyl-tRNA(Glu): step 2/2. The protein is Glutamate-1-semialdehyde 2,1-aminomutase of Bordetella avium (strain 197N).